Reading from the N-terminus, the 59-residue chain is Large ribosomal subunit protein uL30 (59 aa).

This sequence belongs to the universal ribosomal protein uL30 family. In terms of assembly, part of the 50S ribosomal subunit.

This is Large ribosomal subunit protein uL30 from Acetivibrio thermocellus (strain ATCC 27405 / DSM 1237 / JCM 9322 / NBRC 103400 / NCIMB 10682 / NRRL B-4536 / VPI 7372) (Clostridium thermocellum).